The primary structure comprises 353 residues: Methylthioribose-1-phosphate isomerase (353 aa).

Residues 51–53 (RGA), R94, and Q199 contribute to the substrate site. D240 (proton donor) is an active-site residue. 250 to 251 (NK) provides a ligand contact to substrate.

This sequence belongs to the eIF-2B alpha/beta/delta subunits family. MtnA subfamily. In terms of assembly, homodimer.

The enzyme catalyses 5-(methylsulfanyl)-alpha-D-ribose 1-phosphate = 5-(methylsulfanyl)-D-ribulose 1-phosphate. Its pathway is amino-acid biosynthesis; L-methionine biosynthesis via salvage pathway; L-methionine from S-methyl-5-thio-alpha-D-ribose 1-phosphate: step 1/6. Functionally, catalyzes the interconversion of methylthioribose-1-phosphate (MTR-1-P) into methylthioribulose-1-phosphate (MTRu-1-P). This is Methylthioribose-1-phosphate isomerase from Bacillus licheniformis (strain ATCC 14580 / DSM 13 / JCM 2505 / CCUG 7422 / NBRC 12200 / NCIMB 9375 / NCTC 10341 / NRRL NRS-1264 / Gibson 46).